The chain runs to 93 residues: Small ribosomal subunit protein uS19 (93 aa).

This sequence belongs to the universal ribosomal protein uS19 family.

Functionally, protein S19 forms a complex with S13 that binds strongly to the 16S ribosomal RNA. This chain is Small ribosomal subunit protein uS19, found in Blochmanniella floridana.